We begin with the raw amino-acid sequence, 1019 residues long: MSKNDNQDISEFDPLNREFTEAEKQQQMQQEQEFFSQSILDIVDDGFIVASSSQSTPSISVLSNSLPHGDQKSDPITEAIRKEILEKQRDILREYLANTNPELAAQIAKEEDDKKFRAFLSNQDNYALINKAFEDPETKKNLEEVEIVGYRNILSTYSAASGYPGGFQPVQWENQVSASDLRSTVVKNDAGEELCTLNETTIKTNSLIVAKQDGTQVQINSYREIDFPIKLDKADGSMHLSMVALKADGTKPAKDKAVYFTAHYEEGPNGKPQLKEISSPQPLKFVGTGDDAVAYIEHGGEIYTLAVTRGKYKAMMKEVALNNGQSVDLSQTIAEDLTKVQGPSHVRHTPIITPNQELELSIETHSNQQVPPITTFNKPLQPEISQTHQLQPQQAQSSGIPNLVLNAAHALSISMQDLLHNINASLTQKQDINKQSDLIKEAANTILNNKKSDFAEKQYNIIALTENTLSNKDIIADAKVNVVSALLETIQNDQNTLDIQKSKILEATVAITLNSENIELKQKQQILEKVVDVSLSIKDDISRAVAIDSITDAVIKSNIANKDKEQIFMTIFDQVNSYEFSNITKQKLLGSMLKKAVETKVISPEQQQLIHQNLDKITTEHTKRDTIEKVNNILLDPFSNTVLKTTNIQVITANVLDSPVPVEIKSELIQVVTQKVAESALEPKDKTEIVKGIGKIIATHSDTSLPLYDKGVIMESVAKGIVESKTDLRERELITEGLVNGIYEVKGDKAVVHAISSVIANSNINQSEKEVLKKSQDIVSERVLDKEIQNLDGELKEKNIEESKLRDDIYNKTQDVANELNIKTFLDDNHGKREVSEEVPKNTSSLLNDISQRTIEKVNNLRAMLSQDANLKTFEEKKDESTKKVDELVKAFDNKSSTEEQQNFIKSHLIDNKTLSREVRLQIIDNLLKAQAQKRAETIENLSAKTEDVRVVSGKSELEPISKDEPYIQKAKMVVERDRVGIKDNIKIMGALINARDSIQSENLNKSTHIKKESSVPQR.

The tract at residues 1–33 (MSKNDNQDISEFDPLNREFTEAEKQQQMQQEQE) is disordered. Residues 14–24 (PLNREFTEAEK) show a composition bias toward basic and acidic residues.

It localises to the cytoplasm. The sequence is that of Antigenic heat-stable 120 kDa protein (sca4) from Rickettsia typhi (strain ATCC VR-144 / Wilmington).